Here is a 386-residue protein sequence, read N- to C-terminus: DNA replication and repair protein RecF (386 aa).

G30–T37 serves as a coordination point for ATP.

The protein belongs to the RecF family.

It localises to the cytoplasm. Its function is as follows. The RecF protein is involved in DNA metabolism; it is required for DNA replication and normal SOS inducibility. RecF binds preferentially to single-stranded, linear DNA. It also seems to bind ATP. In Natranaerobius thermophilus (strain ATCC BAA-1301 / DSM 18059 / JW/NM-WN-LF), this protein is DNA replication and repair protein RecF.